The chain runs to 335 residues: Anthranilate phosphoribosyltransferase (335 aa).

5-phospho-alpha-D-ribose 1-diphosphate is bound by residues Gly82, 85–86 (GD), Thr90, 92–95 (NIST), 110–118 (KHGGRSVSS), and Ser122. Gly82 is an anthranilate binding site. Residue Ser94 participates in Mg(2+) binding. Arg168 is an anthranilate binding site. 2 residues coordinate Mg(2+): Asp226 and Glu227.

The protein belongs to the anthranilate phosphoribosyltransferase family. As to quaternary structure, homodimer. Mg(2+) serves as cofactor.

The catalysed reaction is N-(5-phospho-beta-D-ribosyl)anthranilate + diphosphate = 5-phospho-alpha-D-ribose 1-diphosphate + anthranilate. It functions in the pathway amino-acid biosynthesis; L-tryptophan biosynthesis; L-tryptophan from chorismate: step 2/5. In terms of biological role, catalyzes the transfer of the phosphoribosyl group of 5-phosphorylribose-1-pyrophosphate (PRPP) to anthranilate to yield N-(5'-phosphoribosyl)-anthranilate (PRA). The protein is Anthranilate phosphoribosyltransferase of Francisella philomiragia subsp. philomiragia (strain ATCC 25017 / CCUG 19701 / FSC 153 / O#319-036).